The primary structure comprises 89 residues: MAVTKEQKASIVKKFGASEKDTGDVKVQIALLTEKINQLTNHCKDHPKDAGSRRGLISMVGHRRSLLKYYRRTDIEGYRTILKELNLRK.

It belongs to the universal ribosomal protein uS15 family. In terms of assembly, part of the 30S ribosomal subunit. Forms a bridge to the 50S subunit in the 70S ribosome, contacting the 23S rRNA.

In terms of biological role, one of the primary rRNA binding proteins, it binds directly to 16S rRNA where it helps nucleate assembly of the platform of the 30S subunit by binding and bridging several RNA helices of the 16S rRNA. Functionally, forms an intersubunit bridge (bridge B4) with the 23S rRNA of the 50S subunit in the ribosome. This chain is Small ribosomal subunit protein uS15, found in Treponema denticola (strain ATCC 35405 / DSM 14222 / CIP 103919 / JCM 8153 / KCTC 15104).